The following is a 678-amino-acid chain: DNA gyrase subunit B (678 aa).

The Toprim domain maps to Ser456–Pro570. 3 residues coordinate Mg(2+): Glu462, Asp535, and Asp537.

This sequence belongs to the type II topoisomerase GyrB family. As to quaternary structure, heterotetramer, composed of two GyrA and two GyrB chains. In the heterotetramer, GyrA contains the active site tyrosine that forms a transient covalent intermediate with the DNA, while GyrB binds cofactors catalyzes ATP hydrolysis. Mg(2+) is required as a cofactor. Mn(2+) serves as cofactor. It depends on Ca(2+) as a cofactor.

The protein resides in the cytoplasm. The enzyme catalyses ATP-dependent breakage, passage and rejoining of double-stranded DNA.. DNA supercoiling is inhibited by fluoroquinolones; IC(50) 1 ug/ml for sitafloxacin. Its function is as follows. A type II topoisomerase that negatively supercoils closed circular double-stranded (ds) DNA in an ATP-dependent manner to modulate DNA topology and maintain chromosomes in an underwound state. Negative supercoiling favors strand separation, and DNA replication, transcription, recombination and repair, all of which involve strand separation. Also able to catalyze the interconversion of other topological isomers of dsDNA rings, including catenanes and knotted rings. Type II topoisomerases break and join 2 DNA strands simultaneously in an ATP-dependent manner. The polypeptide is DNA gyrase subunit B (Mycobacterium leprae (strain TN)).